Reading from the N-terminus, the 265-residue chain is Small ribosomal subunit protein uS2 (265 aa).

Belongs to the universal ribosomal protein uS2 family.

In Microcystis aeruginosa (strain NIES-843 / IAM M-2473), this protein is Small ribosomal subunit protein uS2.